The sequence spans 122 residues: Large ribosomal subunit protein bL12 (122 aa).

This sequence belongs to the bacterial ribosomal protein bL12 family. As to quaternary structure, homodimer. Part of the ribosomal stalk of the 50S ribosomal subunit. Forms a multimeric L10(L12)X complex, where L10 forms an elongated spine to which 2 to 4 L12 dimers bind in a sequential fashion. Binds GTP-bound translation factors.

Functionally, forms part of the ribosomal stalk which helps the ribosome interact with GTP-bound translation factors. Is thus essential for accurate translation. This Lacticaseibacillus casei (strain BL23) (Lactobacillus casei) protein is Large ribosomal subunit protein bL12.